We begin with the raw amino-acid sequence, 182 residues long: Ferredoxin-thioredoxin reductase subunit A1, chloroplastic (182 aa).

A chloroplast-targeting transit peptide spans 1-81 (MSSQIALSPA…VAIKSADSIN (81 aa)).

It belongs to the ferredoxin thioredoxin reductase alpha subunit family. In terms of assembly, heterodimer of subunit A (variable subunit) and subunit B (catalytic subunit). Heterodimeric FTR forms a complex with ferredoxin and thioredoxin.

The protein resides in the plastid. It localises to the chloroplast. Its function is as follows. Variable subunit of the ferredoxin-thioredoxin reductase (FTR), which catalyzes the two-electron reduction of thioredoxins by the electrons provided by reduced ferredoxin. This is Ferredoxin-thioredoxin reductase subunit A1, chloroplastic from Arabidopsis thaliana (Mouse-ear cress).